The following is a 162-amino-acid chain: MPSFDVVSEVDLMEVENAFNQARKEIAQRFDFKGTHTELERDKEQNVLIRAGSEGRAEAALQVLMEKLAKRGVALESLDPQKLEPASGGHVRQLVKLKRGLKIEDARKIVAKVKESGIKVQAAIQGEAVRVTGKKRDDLQAAIHAIRAAAFPIPLQFQNFRD.

Belongs to the YajQ family.

In terms of biological role, nucleotide-binding protein. This chain is Nucleotide-binding protein A2cp1_0112, found in Anaeromyxobacter dehalogenans (strain 2CP-1 / ATCC BAA-258).